Consider the following 438-residue polypeptide: Ubiquitin carboxyl-terminal hydrolase 27 (438 aa).

Positions 78–421 (RGLINLGNTC…EGYLLFYHKQ (344 aa)) constitute a USP domain. Residue cysteine 87 is the Nucleophile of the active site. Catalysis depends on histidine 380, which acts as the Proton acceptor.

This sequence belongs to the peptidase C19 family. Interacts with phosphorylated BCL2L11 isoform BIMEL; this interaction leads to BCL2L11 deubiquitination and stabilization.

It localises to the cytoplasm. The protein resides in the cytosol. It is found in the nucleus. The catalysed reaction is Thiol-dependent hydrolysis of ester, thioester, amide, peptide and isopeptide bonds formed by the C-terminal Gly of ubiquitin (a 76-residue protein attached to proteins as an intracellular targeting signal).. Functionally, deubiquitinase involved in innate antiviral immunity by mediating deubiquitination of CGAS and RIGI. Negatively regulates RIGI by mediating 'Lys-63'-linked deubiquitination of RIGI, inhibiting type I interferon signaling. Also regulates 'Lys-63'-linked ubiquitination level of MDA5/IFIH1. Acts as a positive regulator of the cGAS-STING pathway by catalyzing 'Lys-48'-linked deubiquitination of CGAS, thereby promoting its stabilization. Can reduce the levels of BCL2L11/BIM ubiquitination and stabilize BCL2L11 in response to the RAF-MAPK-degradation signal. By acting on BCL2L11 levels, may counteract the anti-apoptotic effects of MAPK activity. The protein is Ubiquitin carboxyl-terminal hydrolase 27 of Mus musculus (Mouse).